The sequence spans 43 residues: MKKVFFGLVILTALAISFVAGQQSVSTASASDEVTVASAIRGA.

The first 30 residues, 1–30 (MKKVFFGLVILTALAISFVAGQQSVSTASA), serve as a signal peptide directing secretion.

As to quaternary structure, interacts with the viral AimR transcriptional regulator; this interaction changes the oligomeric state of AimR from an active dimer to an inactive monomer leading to lysogeny. Post-translationally, cleaved by host extracellular proteases, thereby releasing the mature arbitrium peptide.

The protein localises to the secreted. Functionally, part of the latency-replication switch system which decides at the onset of infection whether to replicate and lyse the host or to lysogenize (latency) and keep the host viable. In terms of biological role, peptide which is released by the infected host bacteria and acts as a communication agent that affects the latency versus replication (lysogeny-lysis) decision for any new infecting virus from the same specie. High concentration of arbitrium peptide results in increased lysogeny in the upcoming viruses. The arbitrium peptide is secreted by infected bacteria and, after several cycles of infection, accumulates in the extracellular medium. When a virus from the same specie subsequently infects an uninfected bacterium which has internalized the peptide via its OPP transporter, the peptide will binds to the viral AimR transcriptional regulator and prevents AimR transcriptional activation of the aimX locus. Inhibition of aimX transcription promotes lysogeny. The sequence is that of Protein AimP (aimP) from Bacillus phage phi3T (Bacteriophage phi-3T).